We begin with the raw amino-acid sequence, 348 residues long: Dihydroorotase (348 aa).

Residues H17 and H19 each contribute to the Zn(2+) site. Residues 19 to 21 (HLR) and N45 contribute to the substrate site. Residues K103, H140, and H178 each coordinate Zn(2+). K103 is modified (N6-carboxylysine). H140 lines the substrate pocket. L223 serves as a coordination point for substrate. Residue D251 coordinates Zn(2+). The active site involves D251. Substrate-binding residues include H255 and A267.

It belongs to the metallo-dependent hydrolases superfamily. DHOase family. Class II DHOase subfamily. In terms of assembly, homodimer. Requires Zn(2+) as cofactor.

The enzyme catalyses (S)-dihydroorotate + H2O = N-carbamoyl-L-aspartate + H(+). It functions in the pathway pyrimidine metabolism; UMP biosynthesis via de novo pathway; (S)-dihydroorotate from bicarbonate: step 3/3. In terms of biological role, catalyzes the reversible cyclization of carbamoyl aspartate to dihydroorotate. The protein is Dihydroorotase of Escherichia coli (strain UTI89 / UPEC).